The sequence spans 214 residues: Charged multivesicular body protein 2b (214 aa).

Residues 25 to 55 (QRQIARDRTALEKQEKQLEMEIKKMAKTGNR) adopt a coiled-coil conformation. The segment at 178–199 (MAHAPSAARKTPSAATAKADGI) is disordered. The MIT-interacting motif signature appears at 202–212 (EDIERQLKALG).

This sequence belongs to the SNF7 family. As to quaternary structure, probable core component of the endosomal sorting required for transport complex III (ESCRT-III). ESCRT-III components are thought to multimerize to form a flat lattice on the perimeter membrane of the endosome.

The protein localises to the cytoplasm. The protein resides in the cytosol. Its subcellular location is the late endosome membrane. In terms of biological role, probable core component of the endosomal sorting required for transport complex III (ESCRT-III) which is involved in multivesicular bodies (MVBs) formation and sorting of endosomal cargo proteins into MVBs. MVBs contain intraluminal vesicles (ILVs) that are generated by invagination and scission from the limiting membrane of the endosome and mostly are delivered to lysosomes enabling degradation of membrane proteins, such as stimulated growth factor receptors, lysosomal enzymes and lipids. The protein is Charged multivesicular body protein 2b (chmp2b) of Danio rerio (Zebrafish).